Reading from the N-terminus, the 346-residue chain is Uroporphyrinogen decarboxylase (346 aa).

Substrate contacts are provided by residues 23–27 (RQAGR), aspartate 73, tyrosine 151, serine 206, and histidine 321.

The protein belongs to the uroporphyrinogen decarboxylase family. As to quaternary structure, homodimer.

The protein resides in the cytoplasm. It catalyses the reaction uroporphyrinogen III + 4 H(+) = coproporphyrinogen III + 4 CO2. The protein operates within porphyrin-containing compound metabolism; protoporphyrin-IX biosynthesis; coproporphyrinogen-III from 5-aminolevulinate: step 4/4. In terms of biological role, catalyzes the decarboxylation of four acetate groups of uroporphyrinogen-III to yield coproporphyrinogen-III. This is Uroporphyrinogen decarboxylase from Aliarcobacter butzleri (strain RM4018) (Arcobacter butzleri).